Here is a 388-residue protein sequence, read N- to C-terminus: Succinate--CoA ligase [ADP-forming] subunit beta (388 aa).

In terms of domain architecture, ATP-grasp spans 9–245 (KALLKEYGMP…KSQENERELK (237 aa)). ATP is bound by residues K46, 53-55 (GRG), E100, Y103, and E108. Mg(2+)-binding residues include N200 and D214. Residues N265 and 322–324 (GIV) each bind substrate.

Belongs to the succinate/malate CoA ligase beta subunit family. As to quaternary structure, heterotetramer of two alpha and two beta subunits. Mg(2+) is required as a cofactor.

It carries out the reaction succinate + ATP + CoA = succinyl-CoA + ADP + phosphate. It catalyses the reaction GTP + succinate + CoA = succinyl-CoA + GDP + phosphate. The protein operates within carbohydrate metabolism; tricarboxylic acid cycle; succinate from succinyl-CoA (ligase route): step 1/1. Succinyl-CoA synthetase functions in the citric acid cycle (TCA), coupling the hydrolysis of succinyl-CoA to the synthesis of either ATP or GTP and thus represents the only step of substrate-level phosphorylation in the TCA. The beta subunit provides nucleotide specificity of the enzyme and binds the substrate succinate, while the binding sites for coenzyme A and phosphate are found in the alpha subunit. This chain is Succinate--CoA ligase [ADP-forming] subunit beta, found in Acinetobacter baumannii (strain AB307-0294).